The following is a 314-amino-acid chain: DNA-directed RNA polymerase subunit alpha (314 aa).

Positions 1 to 228 (MIEFEKPNIH…EHLGLFMDIS (228 aa)) are alpha N-terminal domain (alpha-NTD). The segment at 242-314 (PVAASASDSA…DMNLGFRKED (73 aa)) is alpha C-terminal domain (alpha-CTD).

Belongs to the RNA polymerase alpha chain family. In terms of assembly, homodimer. The RNAP catalytic core consists of 2 alpha, 1 beta, 1 beta' and 1 omega subunit. When a sigma factor is associated with the core the holoenzyme is formed, which can initiate transcription.

The enzyme catalyses RNA(n) + a ribonucleoside 5'-triphosphate = RNA(n+1) + diphosphate. Functionally, DNA-dependent RNA polymerase catalyzes the transcription of DNA into RNA using the four ribonucleoside triphosphates as substrates. The protein is DNA-directed RNA polymerase subunit alpha of Leuconostoc mesenteroides subsp. mesenteroides (strain ATCC 8293 / DSM 20343 / BCRC 11652 / CCM 1803 / JCM 6124 / NCDO 523 / NBRC 100496 / NCIMB 8023 / NCTC 12954 / NRRL B-1118 / 37Y).